The primary structure comprises 338 residues: Aspartate carbamoyltransferase catalytic subunit (338 aa).

The carbamoyl phosphate site is built by arginine 59 and threonine 60. Lysine 87 provides a ligand contact to L-aspartate. The carbamoyl phosphate site is built by arginine 109, histidine 142, and glutamine 145. L-aspartate is bound by residues arginine 182 and arginine 253. Positions 294 and 295 each coordinate carbamoyl phosphate.

Belongs to the aspartate/ornithine carbamoyltransferase superfamily. ATCase family. As to quaternary structure, heterododecamer (2C3:3R2) of six catalytic PyrB chains organized as two trimers (C3), and six regulatory PyrI chains organized as three dimers (R2).

The enzyme catalyses carbamoyl phosphate + L-aspartate = N-carbamoyl-L-aspartate + phosphate + H(+). It functions in the pathway pyrimidine metabolism; UMP biosynthesis via de novo pathway; (S)-dihydroorotate from bicarbonate: step 2/3. Catalyzes the condensation of carbamoyl phosphate and aspartate to form carbamoyl aspartate and inorganic phosphate, the committed step in the de novo pyrimidine nucleotide biosynthesis pathway. This chain is Aspartate carbamoyltransferase catalytic subunit, found in Prochlorococcus marinus subsp. pastoris (strain CCMP1986 / NIES-2087 / MED4).